The sequence spans 152 residues: Ribosome maturation factor RimP (152 aa).

The protein belongs to the RimP family.

It is found in the cytoplasm. Required for maturation of 30S ribosomal subunits. The sequence is that of Ribosome maturation factor RimP from Burkholderia lata (strain ATCC 17760 / DSM 23089 / LMG 22485 / NCIMB 9086 / R18194 / 383).